The sequence spans 439 residues: GTPase Der (439 aa).

2 EngA-type G domains span residues 4–169 (AMVS…PQEE) and 177–352 (IKIA…EEYN). GTP-binding positions include 10-17 (GRPNVGKS), 57-61 (DTGGL), 120-123 (NKVD), 183-190 (GKPNVGKS), 230-234 (DTAGI), and 295-298 (NKWD). A KH-like domain is found at 353–437 (KRITTGLLNN…PVVISTRKRG (85 aa)).

Belongs to the TRAFAC class TrmE-Era-EngA-EngB-Septin-like GTPase superfamily. EngA (Der) GTPase family. Associates with the 50S ribosomal subunit.

GTPase that plays an essential role in the late steps of ribosome biogenesis. The sequence is that of GTPase Der from Thermoanaerobacter pseudethanolicus (strain ATCC 33223 / 39E) (Clostridium thermohydrosulfuricum).